Here is a 478-residue protein sequence, read N- to C-terminus: ATP-dependent RNA helicase DDX19A (478 aa).

Position 2 is an N-acetylalanine (Ala-2). The interval 2 to 299 (ATDSWALAVD…DPNIIKLKRE (298 aa)) is N-terminal lobe. Lys-26 is covalently cross-linked (Glycyl lysine isopeptide (Lys-Gly) (interchain with G-Cter in SUMO1); alternate). A Glycyl lysine isopeptide (Lys-Gly) (interchain with G-Cter in SUMO2); alternate cross-link involves residue Lys-26. A disordered region spans residues 31 to 55 (KPDTNGVIKTNATPEKTDEEEKEDR). The tract at residues 54–67 (DRAAQSLLNKLIRS) is N-terminal helix. The Q motif motif lies at 91–119 (KSFEELRLKPQLLQGVYAMGFNRPSKIQE). ATP is bound by residues Gln-118 and 137–144 (SQSGTGKT). In terms of domain architecture, Helicase ATP-binding spans 124 to 294 (MMLAEPPQNL…QKVVPDPNII (171 aa)). The short motif at 241–244 (DEAD) is the DEAD box element. Residues 300-478 (EETLDTIKQY…DLDEIEKIAN (179 aa)) form a C-terminal lobe region. Residues 305–473 (TIKQYYVLCN…RLDTDDLDEI (169 aa)) enclose the Helicase C-terminal domain. 2 residues coordinate ATP: Arg-428 and Arg-431.

It belongs to the DEAD box helicase family. DDX19/DBP5 subfamily.

The protein localises to the cytoplasm. Its subcellular location is the nucleus. It localises to the nucleoplasm. It catalyses the reaction ATP + H2O = ADP + phosphate + H(+). Functionally, ATP-dependent RNA helicase involved in mRNA export from the nucleus. Rather than unwinding RNA duplexes, DDX19 functions as a remodeler of ribonucleoprotein particles, whereby proteins bound to nuclear mRNA are dissociated and replaced by cytoplasmic mRNA binding proteins. This chain is ATP-dependent RNA helicase DDX19A (DDX19A), found in Bos taurus (Bovine).